The following is a 430-amino-acid chain: MDNTIIRRAREGRIDDEMRKIAEAEGVSPEKLRDRIAKGQVVYIRNVKWPSEKVVAIGKGLSTKINVNLGTSTEVVDLDSELKKVEVANKWGDTLMDLSVGGDLDAIRRAVISKSKLPVGTVPVYQAFIEAFNKRSGGAYFTIDDLFNTIERQLKDGVAFMTIHAAVTKEAAIRVLKSDRVIPVVSRGGDMIIGWMLHNDAENPYLTHWDYLLELFAQYDAVISIGDALRPGAVADAHDEFHVGELVEAARLAKRAIKAGVQVMIEGPGHVPLNDVIWTIKLEKRLTGGVPYYVLGPLPTDVAAPYDHIASAVGAALAAAAGADLLCYITPAEHLSLPTVEQVEQGAIAYRIAAHIGDVVKLGRKARRWDDEVSYYRGRLMWDEMIKRLVDPERAYKVYTQYGPPKVKGCTMCGGYCPMNMVIQQARRLK.

Substrate contacts are provided by residues N68, M96, Y125, H164, 186-188, 227-230, and E266; these read SRG and DALR. Position 270 (H270) interacts with Zn(2+). Residue Y293 coordinates substrate. H334 serves as a coordination point for Zn(2+). C410, C413, and C417 together coordinate [4Fe-4S] cluster.

Belongs to the ThiC family. [4Fe-4S] cluster serves as cofactor.

It catalyses the reaction 5-amino-1-(5-phospho-beta-D-ribosyl)imidazole + S-adenosyl-L-methionine = 4-amino-2-methyl-5-(phosphooxymethyl)pyrimidine + CO + 5'-deoxyadenosine + formate + L-methionine + 3 H(+). It functions in the pathway cofactor biosynthesis; thiamine diphosphate biosynthesis. Its function is as follows. Catalyzes the synthesis of the hydroxymethylpyrimidine phosphate (HMP-P) moiety of thiamine from aminoimidazole ribotide (AIR) in a radical S-adenosyl-L-methionine (SAM)-dependent reaction. This is Phosphomethylpyrimidine synthase from Pyrobaculum aerophilum (strain ATCC 51768 / DSM 7523 / JCM 9630 / CIP 104966 / NBRC 100827 / IM2).